Consider the following 352-residue polypeptide: Macrophage-capping protein (352 aa).

M1 carries the post-translational modification N-acetylmethionine. One copy of the Gelsolin-like 1 repeat lies at 27-75 (EKLKPVPIARESHGIFFSGDSYLVLHNGPEEASHLHLWIGQQSSRDEQG). A Nuclear localization signal motif is present at residues 139 to 148 (RKLYQVKGKK). Gelsolin-like repeat units lie at residues 150–190 (IRAT…LERN) and 265–311 (MNLT…KERQ). S341 is subject to Phosphoserine.

It belongs to the villin/gelsolin family. In terms of assembly, interacts with NUP62. Interacts with NUTF2 and RAN; involved in CAPG nuclear import. In terms of processing, phosphorylated. Nuclear GCAP39 is more highly phosphorylated than cytoplasmic GCAP39. As to expression, present in a large variety of tissues and is particularly abundant in kidney and lung. Highly expressed in macrophages (at protein level).

The protein resides in the nucleus. It localises to the cytoplasm. Its subcellular location is the melanosome. The protein localises to the cell projection. It is found in the lamellipodium. The protein resides in the ruffle. In terms of biological role, calcium-sensitive protein which reversibly blocks the barbed ends of actin filaments but does not sever preformed actin filaments. May play an important role in macrophage function. May play a role in regulating cytoplasmic and/or nuclear structures through potential interactions with actin. May bind DNA. Uncapping occurs either when Ca(2+) falls or when the concentration of polyphosphoinositide rises, both at low and high Ca(2+). This is Macrophage-capping protein (Capg) from Mus musculus (Mouse).